We begin with the raw amino-acid sequence, 412 residues long: Cysteine desulfurase (412 aa).

N6-(pyridoxal phosphate)lysine is present on K231. The Cysteine persulfide intermediate role is filled by C369.

The protein belongs to the class-V pyridoxal-phosphate-dependent aminotransferase family. Csd subfamily. Homodimer. Interacts with SufE and the SufBCD complex composed of SufB, SufC and SufD. The interaction with SufE is required to mediate the direct transfer of the sulfur atom from the S-sulfanylcysteine. Pyridoxal 5'-phosphate is required as a cofactor.

It localises to the cytoplasm. It catalyses the reaction (sulfur carrier)-H + L-cysteine = (sulfur carrier)-SH + L-alanine. The enzyme catalyses L-selenocysteine + AH2 = hydrogenselenide + L-alanine + A + H(+). It functions in the pathway cofactor biosynthesis; iron-sulfur cluster biosynthesis. Its function is as follows. Cysteine desulfurases mobilize the sulfur from L-cysteine to yield L-alanine, an essential step in sulfur metabolism for biosynthesis of a variety of sulfur-containing biomolecules. Component of the suf operon, which is activated and required under specific conditions such as oxidative stress and iron limitation. Acts as a potent selenocysteine lyase in vitro, that mobilizes selenium from L-selenocysteine. Selenocysteine lyase activity is however unsure in vivo. In Dickeya dadantii (strain 3937) (Erwinia chrysanthemi (strain 3937)), this protein is Cysteine desulfurase (sufS).